Reading from the N-terminus, the 316-residue chain is Metal cation efflux system protein CzcD (316 aa).

Topologically, residues 1-16 (MGAGHSHDHPGGNERS) are cytoplasmic. A helical transmembrane segment spans residues 17 to 37 (LKIALALTGTFLIAEVVGGVM). The Periplasmic portion of the chain corresponds to 38-46 (TKSLALISD). A helical transmembrane segment spans residues 47–67 (AAHMLTDTVALAIALAAIAIA). Residues 68-81 (KRPADKKRTFGYYR) are Cytoplasmic-facing. The helical transmembrane segment at 82–102 (FEILAAAFNALLLFGVAIYIL) threads the bilayer. Residues 103-114 (YEAYLRLKSPPQ) lie on the Periplasmic side of the membrane. Residues 115-135 (IESTGMFVVAVLGLIINLISM) form a helical membrane-spanning segment. Over 136 to 151 (RMLSSGQSSSLNVKGA) the chain is Cytoplasmic. 2 helical membrane-spanning segments follow: residues 152-172 (YLEV…AIII) and 174-194 (FTGW…WVLP). Residues 195–316 (RTWILLKSSL…GSKSLAAGGN (122 aa)) lie on the Cytoplasmic side of the membrane.

The protein belongs to the cation diffusion facilitator (CDF) transporter (TC 2.A.4) family. SLC30A subfamily.

It is found in the cell inner membrane. With respect to regulation, efflux is inhibited by FCCP. Functionally, mediates a low-level metal ion resistance, probably by efflux of cations from the cytoplasm into the periplasm. Also mediates resistance to cobalt, cadmium and zinc via regulation of the Czc system. May repress expression of the Czc system by an export of the inducing cations. Binds and transports zinc. Can also bind cobalt, copper and nickel. This Cupriavidus metallidurans (strain ATCC 43123 / DSM 2839 / NBRC 102507 / CH34) (Ralstonia metallidurans) protein is Metal cation efflux system protein CzcD (czcD).